A 184-amino-acid chain; its full sequence is Peptide deformylase (184 aa).

2 residues coordinate Fe cation: Cys111 and His154. Glu155 is an active-site residue. His158 provides a ligand contact to Fe cation.

Belongs to the polypeptide deformylase family. It depends on Fe(2+) as a cofactor.

The enzyme catalyses N-terminal N-formyl-L-methionyl-[peptide] + H2O = N-terminal L-methionyl-[peptide] + formate. In terms of biological role, removes the formyl group from the N-terminal Met of newly synthesized proteins. Requires at least a dipeptide for an efficient rate of reaction. N-terminal L-methionine is a prerequisite for activity but the enzyme has broad specificity at other positions. In Lactobacillus gasseri (strain ATCC 33323 / DSM 20243 / BCRC 14619 / CIP 102991 / JCM 1131 / KCTC 3163 / NCIMB 11718 / NCTC 13722 / AM63), this protein is Peptide deformylase.